Here is a 192-residue protein sequence, read N- to C-terminus: Inosine triphosphate pyrophosphatase (192 aa).

11–16 (TGNKNK) contacts ITP. Glutamate 41 is a Mg(2+) binding site. ITP-binding positions include lysine 53, 69 to 70 (DT), lysine 86, 146 to 149 (FGWD), lysine 169, and 174 to 175 (HR).

It belongs to the HAM1 NTPase family. In terms of assembly, homodimer. The cofactor is Mg(2+). Mn(2+) is required as a cofactor.

The protein resides in the cytoplasm. The enzyme catalyses ITP + H2O = IMP + diphosphate + H(+). It carries out the reaction dITP + H2O = dIMP + diphosphate + H(+). The catalysed reaction is XTP + H2O = XMP + diphosphate + H(+). Pyrophosphatase that hydrolyzes non-canonical purine nucleotides such as inosine triphosphate (ITP), deoxyinosine triphosphate (dITP) or xanthosine 5'-triphosphate (XTP) to their respective monophosphate derivatives. The enzyme does not distinguish between the deoxy- and ribose forms. Probably excludes non-canonical purines from RNA and DNA precursor pools, thus preventing their incorporation into RNA and DNA and avoiding chromosomal lesions. The polypeptide is Inosine triphosphate pyrophosphatase (Ciona intestinalis (Transparent sea squirt)).